A 635-amino-acid polypeptide reads, in one-letter code: MPIITLPDGNQRQFDNTTSIMEIAADIGPGLAKACIAGRVDGQLVDACDPIEKDANIAIITAKDDQGLEILRHSCAHLLGHAIKQLYPNAKMAIGPTIENGFYYDIDLDVTINDDELAKIAKRMNELVKTNYTVVKEKVSVEEAKALFKERGESYKLEILEGIHPDDRPGLYHHEEYIDMCRGPHVPVMKFCQYFKLMKVSGAYWRGNSDNKMLQRIYGTAWADKKQLNAYLKRLEEAAKRDHRKIGKQLDLYHMQEEAPGMVFWHSNGWTIYRELEKYVREQTEAYDYQEVKAPQILDRALWEKSGHWGKYKDNMFCTSSENRDYAIKPMNCPGHLQIFNQGLKSYRDLPLRMAEFGSCHRNEPSGSLHGLMRVRAFTQDDAHIFCTEEQILDEVSACIQMVFECYKTFGFDDIAVKLSTRPDQRVGDDATWDKAEAALANALTTNNINYGVLPGEGAFYGPKIEFTLYDCLGRGWQCGTIQLDFSMPGRLDASFVGEDNERHTPVMIHRAILGSLERFIGILTEEYAGVYPTWLSPKQVVVMNITDKQSAFVDEVVNKLKKSGIRAISDLRNEKIGFKIREHTLKRVPYLLVIGDQEVEAGEVAVRTRKGDDLGKFKVDDFAAYIKEEIITRR.

Residues 1–61 (MPIITLPDGN…EKDANIAIIT (61 aa)) enclose the TGS domain. The interval 242-533 (DHRKIGKQLD…LTEEYAGVYP (292 aa)) is catalytic. Zn(2+) contacts are provided by Cys-333, His-384, and His-510.

The protein belongs to the class-II aminoacyl-tRNA synthetase family. In terms of assembly, homodimer. The cofactor is Zn(2+).

The protein localises to the cytoplasm. It carries out the reaction tRNA(Thr) + L-threonine + ATP = L-threonyl-tRNA(Thr) + AMP + diphosphate + H(+). Functionally, catalyzes the attachment of threonine to tRNA(Thr) in a two-step reaction: L-threonine is first activated by ATP to form Thr-AMP and then transferred to the acceptor end of tRNA(Thr). Also edits incorrectly charged L-seryl-tRNA(Thr). The polypeptide is Threonine--tRNA ligase (Psychromonas ingrahamii (strain DSM 17664 / CCUG 51855 / 37)).